The following is a 456-amino-acid chain: Sulfoacetaldehyde dehydrogenase (456 aa).

213-218 (GGTAAA) lines the NAD(+) pocket. Catalysis depends on residues Glu-233 and Cys-267.

Belongs to the aldehyde dehydrogenase family. In terms of assembly, homotetramer.

It carries out the reaction sulfoacetaldehyde + NAD(+) + H2O = sulfoacetate + NADH + 2 H(+). In terms of biological role, mediates conversion of 2-sulfoacetaldehyde into sulfoacetate. The enzyme is specific for NAD; NADP is not a substrate. Part of a pathway that can utilize the amino group of taurine as a sole source of nitrogen for growth. This chain is Sulfoacetaldehyde dehydrogenase (safD), found in Neptuniibacter caesariensis.